Reading from the N-terminus, the 154-residue chain is Yop proteins translocation protein O (154 aa).

The disordered stretch occupies residues 132-154; that stretch reads ELNQQHYQEEQEQEEFLQHHRNA.

Belongs to the SpaM family.

Its function is as follows. Component of the yop secretion machinery. This is Yop proteins translocation protein O (yscO) from Yersinia pseudotuberculosis serotype I (strain IP32953).